Here is a 186-residue protein sequence, read N- to C-terminus: Large ribosomal subunit protein uL6 (186 aa).

The protein belongs to the universal ribosomal protein uL6 family. As to quaternary structure, part of the 50S ribosomal subunit.

In terms of biological role, this protein binds to the 23S rRNA, and is important in its secondary structure. It is located near the subunit interface in the base of the L7/L12 stalk, and near the tRNA binding site of the peptidyltransferase center. The sequence is that of Large ribosomal subunit protein uL6 from Ignicoccus hospitalis (strain KIN4/I / DSM 18386 / JCM 14125).